Reading from the N-terminus, the 687-residue chain is Protein SDA1 homolog (687 aa).

Ser-232, Ser-234, and Ser-236 each carry phosphoserine. The stretch at 254-315 forms a coiled coil; the sequence is KKGSKNKKKL…SCKERFEVKM (62 aa). The disordered stretch occupies residues 484–509; it reads LEKGENTEDDEDGWESASLSEEEEED. Positions 490–509 are enriched in acidic residues; it reads TEDDEDGWESASLSEEEEED. A Phosphothreonine modification is found at Thr-552. A phosphoserine mark is found at Ser-585, Ser-589, and Ser-595. The segment at 604 to 651 is disordered; sequence KKPKSDKETRLATAMAGRTDRKEFVRKKTKINPFSSSTNKEKKKQKNF.

This sequence belongs to the SDA1 family.

The protein localises to the nucleus. The protein resides in the nucleolus. Functionally, required for 60S pre-ribosomal subunits export to the cytoplasm. This chain is Protein SDA1 homolog (Sdad1), found in Mus musculus (Mouse).